Here is a 144-residue protein sequence, read N- to C-terminus: MWLQNLLFLGTVVCSISAPTRSPTLVTRPSQHVDAIQEALSLLNNSNDVTAVMNKAVKVVSEVFDPEGPTCLETRLQLYKEGLQGSLTSLKNPLTMMANHYKQHCPPTPESPCATQNINFKSFKENLKDFLFNIPFDCWKPVKK.

The first 17 residues, 1 to 17, serve as a signal peptide directing secretion; that stretch reads MWLQNLLFLGTVVCSIS. An O-linked (GalNAc...) serine glycan is attached at serine 22. Threonine 27 carries O-linked (GalNAc...) threonine glycosylation. Asparagine 44 is a glycosylation site (N-linked (GlcNAc...) asparagine). Intrachain disulfides connect cysteine 71–cysteine 113 and cysteine 105–cysteine 138.

It belongs to the GM-CSF family. As to quaternary structure, monomer. The signaling GM-CSF receptor complex is a dodecamer of two head-to-head hexamers of two alpha, two beta, and two ligand subunits.

It is found in the secreted. Functionally, cytokine that stimulates the growth and differentiation of hematopoietic precursor cells from various lineages, including granulocytes, macrophages, eosinophils and erythrocytes. This chain is Granulocyte-macrophage colony-stimulating factor (CSF2), found in Canis lupus familiaris (Dog).